Consider the following 208-residue polypeptide: Uracil phosphoribosyltransferase (208 aa).

Residues Arg78, Arg103, and 130–138 each bind 5-phospho-alpha-D-ribose 1-diphosphate; that span reads DPMLATGGS. Uracil contacts are provided by residues Ile193 and 198–200; that span reads GDA. 5-phospho-alpha-D-ribose 1-diphosphate is bound at residue Asp199.

This sequence belongs to the UPRTase family. Mg(2+) is required as a cofactor.

The enzyme catalyses UMP + diphosphate = 5-phospho-alpha-D-ribose 1-diphosphate + uracil. It participates in pyrimidine metabolism; UMP biosynthesis via salvage pathway; UMP from uracil: step 1/1. With respect to regulation, allosterically activated by GTP. In terms of biological role, catalyzes the conversion of uracil and 5-phospho-alpha-D-ribose 1-diphosphate (PRPP) to UMP and diphosphate. This chain is Uracil phosphoribosyltransferase, found in Roseiflexus sp. (strain RS-1).